We begin with the raw amino-acid sequence, 231 residues long: CLAVATA3/ESR (CLE)-related protein 4B-2 (231 aa).

Positions 1 to 21 (MATNTMLCLLILSVVLALAFA) are cleaved as a signal peptide. The required for secretion from the host cytoplasm to the host apoplasm stretch occupies residues 21–83 (ATNKKGDEEP…SNQLPNNNWM (63 aa)). N-linked (GlcNAc...) asparagine glycosylation occurs at Asn-32. Residues 116 to 231 (RKTGMHSQRH…APAGPDPIHH (116 aa)) are disordered. Composition is skewed to basic and acidic residues over residues 125-137 (HHEE…EKRV) and 144-221 (PIHH…EKRG). The A-1 repeat unit spans residues 127 to 135 (EETTLEQEK). A 5 X approximate repeat A region spans residues 127-219 (EETTLEQEKR…HEETTFEQEK (93 aa)). The stretch at 136–147 (RVAGAGPDPIHH) is one CLE-1 repeat. A 5 X approximate repeat CLE region spans residues 136–231 (RVAGAGPDPI…APAGPDPIHH (96 aa)). Residues 148-156 (EETTLEQEK) form an A-2 repeat. The stretch at 157 to 168 (RAVPAGPDPKHH) is one CLE-2 repeat. An A-3 repeat occupies 169–177 (EETTLEQEK). A CLE-3 repeat occupies 178–189 (RAVPAGPDPKHH). Residues 190-198 (EETTLEQEK) form an A-4 repeat. The stretch at 199 to 210 (RAVPAGPDPKHH) is one CLE-4 repeat. An A-5 repeat occupies 211 to 219 (EETTFEQEK). A CLE-5 repeat occupies 220 to 231 (RGAPAGPDPIHH).

This sequence belongs to the CLV3/ESR signal peptide family. As to expression, highly expressed exclusively within the dorsal esophageal gland cell during syncytium formation in host plants.

It localises to the secreted. Its subcellular location is the host cytoplasm. The protein localises to the host extracellular space. The protein resides in the extracellular space. It is found in the apoplast. Its function is as follows. Mimics host plant CLE extracellular signal peptides that regulate cell fate. May play a role in the differentiation or division of feeding cells (syncytia) induced in plant roots during infection. This chain is CLAVATA3/ESR (CLE)-related protein 4B-2 (CLE-4B-2), found in Globodera rostochiensis (Golden nematode worm).